The following is a 267-amino-acid chain: Levodione reductase (267 aa).

17 to 42 (LITGGGSGLGRATAVRLAAEGAKLSL) serves as a coordination point for NAD(+). Ser152 serves as a coordination point for substrate. Tyr165 serves as the catalytic Proton acceptor.

This sequence belongs to the short-chain dehydrogenases/reductases (SDR) family.

It carries out the reaction (4R)-hydroxy-(6R)-2,2,6-trimethylcyclohexanone + NAD(+) = (6R)-2,2,6-trimethyl-1,4-cyclohexanedione + NADH + H(+). Its activity is regulated as follows. Strongly activated by monovalent cations, such as K(+), Na(+), and NH4(+). In terms of biological role, catalyzes the regio- and stereoselective reversible NAD-dependent reduction of (6R)-2,2,6-trimethyl-1,4-cyclohexanedione (levodione) to (4R,6R)-4-hydroxy-2,2,6-trimethylcyclohexanone (actinol). This is Levodione reductase (lvr) from Leifsonia aquatica (Corynebacterium aquaticum).